Here is a 305-residue protein sequence, read N- to C-terminus: 2-methoxy-6-polyprenyl-1,4-benzoquinol methylase, mitochondrial (305 aa).

The transit peptide at 1-34 (MSRLRAPVAKFLADGLKGIRSTALAGSRLSNCRY) directs the protein to the mitochondrion. Residues Thr117, Asp143, and 173-174 (NA) contribute to the S-adenosyl-L-methionine site.

This sequence belongs to the class I-like SAM-binding methyltransferase superfamily. MenG/UbiE family. As to quaternary structure, component of a multi-subunit COQ enzyme complex, composed of at least COQ3, COQ4, COQ5, COQ6, COQ7 and COQ9.

The protein resides in the mitochondrion inner membrane. The catalysed reaction is 2-methoxy-6-(all-trans-decaprenyl)benzene-1,4-diol + S-adenosyl-L-methionine = 5-methoxy-2-methyl-3-(all-trans-decaprenyl)benzene-1,4-diol + S-adenosyl-L-homocysteine + H(+). Its pathway is cofactor biosynthesis; ubiquinone biosynthesis. Its function is as follows. Methyltransferase required for the conversion of 2-decaprenyl-6-methoxy-1,4-benzoquinol (DDMQH2) to 2-decaprenyl-3-methyl-6-methoxy-1,4-benzoquinol (DMQH2). The chain is 2-methoxy-6-polyprenyl-1,4-benzoquinol methylase, mitochondrial from Schizosaccharomyces pombe (strain 972 / ATCC 24843) (Fission yeast).